The primary structure comprises 21 residues: Snake venom serine protease jerdonase (21 aa).

Positions 1–21 constitute a Peptidase S1 domain; that stretch reads IIGGDECNINEHPFLVALYDA.

It belongs to the peptidase S1 family. Snake venom subfamily. As to quaternary structure, monomer. In terms of processing, glycosylated; contains 35.8% neutral carbohydrate. In terms of tissue distribution, expressed by the venom gland.

It localises to the secreted. With respect to regulation, inhibited by PMSF and soybean trypsin inhibitor. Partially inhibited by L-cysteine and DTT. Not affected by EDTA. Its function is as follows. Multifunctional venom serine protease that has fibrino(geno)lytic activity towards the A alpha-chain of human fibrinogen (FGA) and a slow activity towards the B beta-chain (FGB). Also hydrolyzes bovine low-molecular-mass kininogen and releases bradykinin. Catalyzes the hydrolysis of BAEE, S-2238 and S-2302. The protein is Snake venom serine protease jerdonase of Protobothrops jerdonii (Jerdon's pitviper).